Consider the following 122-residue polypeptide: Sarcocystatin-A (122 aa).

An N-terminal signal peptide occupies residues 1–20 (MKYVLILCVITLATVAYAQP). The residue at position 21 (Gln-21) is a Pyrrolidone carboxylic acid. The short motif at 67-71 (QVVSG) is the Secondary area of contact element.

This sequence belongs to the cystatin family.

Its function is as follows. Selectively inhibits the activity of cysteine proteinase of hemocytes, protecting developing adult tissue in pupae from attack by the proteinase. The protein is Sarcocystatin-A of Sarcophaga peregrina (Flesh fly).